Consider the following 1013-residue polypeptide: Probable outer membrane protein PmpG (1013 aa).

An N-terminal signal peptide occupies residues 1–27 (MQTSFHKFFLSMILAYSCCSLSGGGYA). Positions 733 to 1013 (GRSYCRGLWV…GLSAGSKVRF (281 aa)) constitute an Autotransporter domain.

Belongs to the PMP outer membrane protein family.

It localises to the secreted. It is found in the cell wall. The protein resides in the cell outer membrane. This Chlamydia trachomatis serovar D (strain ATCC VR-885 / DSM 19411 / UW-3/Cx) protein is Probable outer membrane protein PmpG (pmpG).